We begin with the raw amino-acid sequence, 273 residues long: Shikimate dehydrogenase (NADP(+)) (273 aa).

Shikimate-binding positions include 14–16 (SKS) and Thr61. Lys65 serves as the catalytic Proton acceptor. Position 77 (Asp77) interacts with NADP(+). Residues Asn86 and Asp102 each coordinate shikimate. NADP(+) is bound by residues 127–131 (GAGGA), 151–156 (NRTGAR), and Met215. Residue Tyr217 participates in shikimate binding. Residue Gly239 coordinates NADP(+).

It belongs to the shikimate dehydrogenase family. In terms of assembly, homodimer.

It catalyses the reaction shikimate + NADP(+) = 3-dehydroshikimate + NADPH + H(+). It participates in metabolic intermediate biosynthesis; chorismate biosynthesis; chorismate from D-erythrose 4-phosphate and phosphoenolpyruvate: step 4/7. Functionally, involved in the biosynthesis of the chorismate, which leads to the biosynthesis of aromatic amino acids. Catalyzes the reversible NADPH linked reduction of 3-dehydroshikimate (DHSA) to yield shikimate (SA). The chain is Shikimate dehydrogenase (NADP(+)) from Thioalkalivibrio sulfidiphilus (strain HL-EbGR7).